The chain runs to 444 residues: MIINPKNYEHIFYSRGNPTVEVDLETTLGIFRAAVPSGASTGIYEALELRDNDKSRYLGKGVQQAIKNINEIIAPKLIGLDCREQKKIDNMMVQELDGSKTEWGWSKSKLGANAILAISMAICRAGAAANKTSLYKYVAQLAGKNTEKMILPVPCLNVINGGSHAGNKLSFQEFMIVPVGAPSFKEAMRYGAEVYHTLKSEIKKKYGIDATNVGDEGGFAPNILNAHEALDLLVASIKKAGYENKVKIAMDVAASEFYNSETKTYDLDFKTPNNDKSLVKTGQELVDLYIELVKKYPIISIEDPFDQDDWENYAKLTEAIGKDVQIVGDDLLVTNPTRIEKALEKKACNALLLKVNQIGSITEAIEACLLSQKNNWGVMVSHRSGETEDVFIADLVVALRTGQIKTGAPCRSERNAKYNQLFRIEESLGANGSFAGDKFRLQLN.

Serine 40 is a Mg(2+) binding site. Serine 40 is modified (phosphoserine). The short motif at 102-106 (EWGWS) is the Pentapeptide insert element. Position 131 is an N6-acetyllysine (lysine 131). Residue lysine 136 forms a Glycyl lysine isopeptide (Lys-Gly) (interchain with G-Cter in ubiquitin) linkage. Tyrosine 137 is modified (phosphotyrosine). Residues histidine 164 and glutamate 173 each contribute to the substrate site. Glutamate 216 (proton donor) is an active-site residue. Residue aspartate 251 coordinates Mg(2+). The short motif at 275–280 (DKSLVK) is the DKSLVK motif element. 2 residues coordinate Mg(2+): glutamate 302 and aspartate 329. The substrate site is built by glutamate 302 and aspartate 329. Threonine 337 is modified (phosphothreonine). Lysine 354 (proton acceptor) is an active-site residue. N6-acetyllysine is present on lysine 373. Residues 381 to 384 (SHRS) and lysine 405 each bind substrate.

Belongs to the enolase family. Homodimer. Forms a complex at least composed of DegP, ENO and HSP70. Interacts with G-actin. Interacts (via the DKSLVK motif) with mammalian host PLG/plasminogen (present in the mosquito blood meal); the interaction occurs at the ookinete cell surface and is required for ookinete invasion of the mosquito midgut. Interacts with A.gambiae EBP; depending on the Plasmodium species, the interaction is either involved in ookinete invasion of the mosquito midgut (P.berghei) or is dispensable (P.falciparum). Requires Mg(2+) as cofactor.

Its subcellular location is the cytoplasm. The protein localises to the nucleus. It is found in the cytoskeleton. It localises to the cell surface. The protein resides in the cell membrane. Its subcellular location is the vacuole. The enzyme catalyses (2R)-2-phosphoglycerate = phosphoenolpyruvate + H2O. Its pathway is carbohydrate degradation; glycolysis; pyruvate from D-glyceraldehyde 3-phosphate: step 4/5. Glycolytic enzyme that catalyzes the conversion of 2-phosphoglycerate to phosphoenolpyruvate. In addition to glycolysis, involved in various processes such as parasite development and invasion. Plays an essential role during ookinete invasion of the mosquito vector midgut by mediating the interaction of the ookinete with the midgut epithelium and, further, by binding to mammalian host plasminogen in the blood meal, whose conversion to active plasmin promotes the invasion process. The chain is Enolase from Plasmodium yoelii yoelii.